The sequence spans 208 residues: Probable splicing factor, arginine/serine-rich 5 (208 aa).

Residues 2 to 74 (PRLYLGKIPY…MRLVVEMARG (73 aa)) enclose the RRM domain. Residues 71–208 (MARGKPRGND…RSPSPGSPKD (138 aa)) are disordered. Residues 84–123 (SRSPRRRSRSPRRRSRTPPRRRSRSRDRKRSRRSRSRSSS) show a composition bias toward basic residues. The span at 128–153 (PVRESRRRSESRSPSPKRDLKREASR) shows a compositional bias: basic and acidic residues.

Belongs to the splicing factor SR family. Post-translationally, extensively phosphorylated on serine residues in the RS domain.

Its subcellular location is the nucleus. Its function is as follows. Plays a functionally redundant role in shifting germ cell sexual differentiation in hermaphrodites. The sequence is that of Probable splicing factor, arginine/serine-rich 5 (rsp-5) from Caenorhabditis elegans.